The following is a 179-amino-acid chain: Large ribosomal subunit protein uL6 (179 aa).

This sequence belongs to the universal ribosomal protein uL6 family. In terms of assembly, part of the 50S ribosomal subunit.

In terms of biological role, this protein binds to the 23S rRNA, and is important in its secondary structure. It is located near the subunit interface in the base of the L7/L12 stalk, and near the tRNA binding site of the peptidyltransferase center. The protein is Large ribosomal subunit protein uL6 of Legionella pneumophila (strain Paris).